A 143-amino-acid chain; its full sequence is Ribosome maturation factor RimP (143 aa).

It belongs to the RimP family.

Its subcellular location is the cytoplasm. Its function is as follows. Required for maturation of 30S ribosomal subunits. The polypeptide is Ribosome maturation factor RimP (Neisseria meningitidis serogroup C (strain 053442)).